The sequence spans 166 residues: Large ribosomal subunit protein uL10 (166 aa).

The protein belongs to the universal ribosomal protein uL10 family. As to quaternary structure, part of the ribosomal stalk of the 50S ribosomal subunit. The N-terminus interacts with L11 and the large rRNA to form the base of the stalk. The C-terminus forms an elongated spine to which L12 dimers bind in a sequential fashion forming a multimeric L10(L12)X complex.

In terms of biological role, forms part of the ribosomal stalk, playing a central role in the interaction of the ribosome with GTP-bound translation factors. In Bacillus cereus (strain ATCC 14579 / DSM 31 / CCUG 7414 / JCM 2152 / NBRC 15305 / NCIMB 9373 / NCTC 2599 / NRRL B-3711), this protein is Large ribosomal subunit protein uL10.